The chain runs to 230 residues: Large ribosomal subunit protein uL1 (230 aa).

It belongs to the universal ribosomal protein uL1 family. As to quaternary structure, part of the 50S ribosomal subunit.

Functionally, binds directly to 23S rRNA. The L1 stalk is quite mobile in the ribosome, and is involved in E site tRNA release. In terms of biological role, protein L1 is also a translational repressor protein, it controls the translation of the L11 operon by binding to its mRNA. This is Large ribosomal subunit protein uL1 from Nitrosomonas europaea (strain ATCC 19718 / CIP 103999 / KCTC 2705 / NBRC 14298).